Reading from the N-terminus, the 205-residue chain is Probable thymidylate kinase (205 aa).

Residue 10–17 (GIDGSGKT) participates in ATP binding.

This sequence belongs to the thymidylate kinase family.

It carries out the reaction dTMP + ATP = dTDP + ADP. The sequence is that of Probable thymidylate kinase (tmk) from Pyrococcus abyssi (strain GE5 / Orsay).